A 101-amino-acid chain; its full sequence is Urease subunit beta (101 aa).

The protein belongs to the urease beta subunit family. In terms of assembly, heterotrimer of UreA (gamma), UreB (beta) and UreC (alpha) subunits. Three heterotrimers associate to form the active enzyme.

It is found in the cytoplasm. It catalyses the reaction urea + 2 H2O + H(+) = hydrogencarbonate + 2 NH4(+). Its pathway is nitrogen metabolism; urea degradation; CO(2) and NH(3) from urea (urease route): step 1/1. The chain is Urease subunit beta from Cereibacter sphaeroides (strain ATCC 17025 / ATH 2.4.3) (Rhodobacter sphaeroides).